The chain runs to 299 residues: Aliphatic sulfonates import ATP-binding protein SsuB (299 aa).

In terms of domain architecture, ABC transporter spans Leu-36–Ile-257. Gly-68–Ser-75 provides a ligand contact to ATP.

The protein belongs to the ABC transporter superfamily. Aliphatic sulfonates importer (TC 3.A.1.17.2) family. The complex is composed of two ATP-binding proteins (SsuB), two transmembrane proteins (SsuC) and a solute-binding protein (SsuA).

It localises to the cell inner membrane. It catalyses the reaction ATP + H2O + aliphatic sulfonate-[sulfonate-binding protein]Side 1 = ADP + phosphate + aliphatic sulfonateSide 2 + [sulfonate-binding protein]Side 1.. In terms of biological role, part of the ABC transporter complex SsuABC involved in aliphatic sulfonates import. Responsible for energy coupling to the transport system. The protein is Aliphatic sulfonates import ATP-binding protein SsuB of Cupriavidus pinatubonensis (strain JMP 134 / LMG 1197) (Cupriavidus necator (strain JMP 134)).